An 877-amino-acid polypeptide reads, in one-letter code: Leucine--tRNA ligase (877 aa).

A 'HIGH' region motif is present at residues 43-53 (PYPSGRIHMGH). Residues 628–632 (KMSKS) carry the 'KMSKS' region motif. ATP is bound at residue Lys-631.

This sequence belongs to the class-I aminoacyl-tRNA synthetase family.

It is found in the cytoplasm. The enzyme catalyses tRNA(Leu) + L-leucine + ATP = L-leucyl-tRNA(Leu) + AMP + diphosphate. The protein is Leucine--tRNA ligase of Brucella suis biovar 1 (strain 1330).